The following is a 105-amino-acid chain: Anti-sigma factor RsrA (105 aa).

Residues Cys11, His37, Cys41, and Cys44 each coordinate Zn(2+). A disulfide bridge links Cys11 with Cys44. The segment at 33–47 (KFEHHFEECSPCLEK) is contributes to redox-sensitivity. A disordered region spans residues 86–105 (QSVPEHDVAAAPSSSAPQES). The segment covering 94–105 (AAAPSSSAPQES) has biased composition (low complexity).

The protein belongs to the zinc-associated anti-sigma factor (ZAS) superfamily. Interacts with cognate sigma factor SigR under reducing but not oxiding conditions. Treatment with the thiol-oxidzing agent diamide inhibits the interaction, while incubation with thioredoxin (trxA) stimulates the interaction. Zn(2+) is required as a cofactor. In terms of processing, under oxidizing conditions up to 3 disulfide bonds are formed. A single disulfide bond inhibits binding to SigR. Cys-11 forms a disulfide bond with either Cys-44 (the major bind) or Cys-41 (a minor bond).

Its function is as follows. A redox-regulated anti-sigma factor for extracytoplasmic function (ECF) sigma factor SigR, and a key sensor of disulfide stress. Holds SigR, its cognate ECF sigma factor, in an inactive form, inhibiting its sigma activity under reducing but not oxidizing conditions; oxidation and reduction of the anti-sigma factor is reversible. Mycothiol (MSH) is competent for reduction of RsrA, allowing it to bind to SigR. In conjunction with its cognate sigma factor SigR may sense the intracellular level of reduced MSH. Probably releases SigR during oxidative stress. This chain is Anti-sigma factor RsrA (rsrA), found in Streptomyces coelicolor (strain ATCC BAA-471 / A3(2) / M145).